The chain runs to 159 residues: Transcriptional repressor NrdR (159 aa).

A zinc finger lies at 3 to 34 (CPFCGSDNTSVKDSRAAEDDTAVRRRRVCESC). Residues 49-139 (IIVVKRDGKR…VYRDFKDPSD (91 aa)) form the ATP-cone domain.

The protein belongs to the NrdR family. Zn(2+) serves as cofactor.

In terms of biological role, negatively regulates transcription of bacterial ribonucleotide reductase nrd genes and operons by binding to NrdR-boxes. The sequence is that of Transcriptional repressor NrdR from Hyphomonas neptunium (strain ATCC 15444).